Reading from the N-terminus, the 38-residue chain is Photosystem II reaction center protein Y (38 aa).

Residues 1–4 (MSMR) lie on the Lumenal side of the membrane. A helical transmembrane segment spans residues 5–23 (LVVVLLPLGIALGWAVYNI). Residues 24 to 38 (GKLAIEQWRRTGSKV) are Stromal-facing.

It belongs to the PsbY family. PSII is composed of 1 copy each of membrane proteins PsbA, PsbB, PsbC, PsbD, PsbE, PsbF, PsbH, PsbI, PsbJ, PsbK, PsbL, PsbM, PsbT, PsbX, PsbY, PsbZ, Psb30/Ycf12, at least 3 peripheral proteins of the oxygen-evolving complex and a large number of cofactors. It forms dimeric complexes.

It is found in the plastid. The protein localises to the cyanelle thylakoid membrane. Its function is as follows. Loosely associated component of the core of photosystem II (PSII), it is not always seen in crystals. PSII is a light-driven water plastoquinone oxidoreductase, using light energy to abstract electrons from H(2)O, generating a proton gradient subsequently used for ATP formation. The sequence is that of Photosystem II reaction center protein Y from Cyanophora paradoxa.